A 210-amino-acid polypeptide reads, in one-letter code: High frequency lysogenization protein HflD homolog (210 aa).

Positions 103–130 form a coiled coil; the sequence is EAKAKLAERLQQIERQLPLYENDIMADQ.

This sequence belongs to the HflD family.

It is found in the cytoplasm. The protein localises to the cell inner membrane. The sequence is that of High frequency lysogenization protein HflD homolog from Actinobacillus pleuropneumoniae serotype 3 (strain JL03).